The primary structure comprises 151 residues: MMAEERTDLEAQIVKDIHFKEIDLVNRDPKNINEDIVKVDFEDVIAEPVGTYSFDGVWKVSYTTFTVSKYWCYRLLSTLLGVPLALLWGFLFACISFCHIWAVVPCIKSYLIEIQCISHIYSLCIRTFCNPVFAALGQVCSNIKVMLRKEV.

At 1 to 83 (MMAEERTDLE…RLLSTLLGVP (83 aa)) the chain is on the cytoplasmic side. Lys38 participates in a covalent cross-link: Glycyl lysine isopeptide (Lys-Gly) (interchain with G-Cter in SUMO3). The interval 64-114 (TFTVSKYWCYRLLSTLLGVPLALLWGFLFACISFCHIWAVVPCIKSYLIEI) is required for interaction with DAG1. Residues 84–104 (LALLWGFLFACISFCHIWAVV) constitute an intramembrane region (helical). The Cytoplasmic portion of the chain corresponds to 105-151 (PCIKSYLIEIQCISHIYSLCIRTFCNPVFAALGQVCSNIKVMLRKEV).

It belongs to the caveolin family. Homooligomer. Interacts with DYSF. Interacts with DLG1 and KCNA5; forms a ternary complex. Interacts with DAG1 (via its C-terminal); the interaction prevents binding of DAG1 with DMD. Interacts with TRIM72. Interacts with MUSK; may regulate MUSK signaling. Interacts with POPDC1. Interacts with CAVIN1, CAVIN2 and CAVIN4. In terms of processing, sumoylation with SUMO3 by PIAS4 may reduce agonist-induced internalization and desensitization of adrenergic receptor ABRD2. As to expression, expressed specifically in skeletal muscle and heart.

The protein resides in the golgi apparatus membrane. It is found in the cell membrane. The protein localises to the membrane. Its subcellular location is the caveola. It localises to the sarcolemma. Its function is as follows. May act as a scaffolding protein within caveolar membranes. Interacts directly with G-protein alpha subunits and can functionally regulate their activity. May also regulate voltage-gated potassium channels. Plays a role in the sarcolemma repair mechanism of both skeletal muscle and cardiomyocytes that permits rapid resealing of membranes disrupted by mechanical stress. Mediates the recruitment of CAVIN2 and CAVIN3 proteins to the caveolae. The sequence is that of Caveolin-3 (CAV3) from Sus scrofa (Pig).